The sequence spans 369 residues: tRNA pseudouridine synthase D (369 aa).

The active-site Nucleophile is D80. A TRUD domain is found at 156–318 (GIPNWFGEQR…LKQERRALRL (163 aa)).

Belongs to the pseudouridine synthase TruD family.

The enzyme catalyses uridine(13) in tRNA = pseudouridine(13) in tRNA. In terms of biological role, responsible for synthesis of pseudouridine from uracil-13 in transfer RNAs. The protein is tRNA pseudouridine synthase D of Xanthomonas axonopodis pv. citri (strain 306).